The sequence spans 174 residues: Secreted cysteine-rich protein UMAG_00792 (174 aa).

A signal peptide spans 1–26 (MVSFKSSSLFLHSLSALLVLTTLSSA). An N-linked (GlcNAc...) asparagine glycan is attached at Asn77.

As to quaternary structure, secreted cysteine-rich proteins (SCRPs) are predicted to form amyloids.

The protein resides in the secreted. Its function is as follows. Secreted cysteine-rich protein that might form amyloid strutures which are involved in attachment to hydrophobic surfaces and in formation of hydrophobic aerial hyphae. In Mycosarcoma maydis (Corn smut fungus), this protein is Secreted cysteine-rich protein UMAG_00792.